A 58-amino-acid polypeptide reads, in one-letter code: U8-ctenitoxin-Pk1a (58 aa).

5 disulfide bridges follow: Cys-2–Cys-16, Cys-9–Cys-22, Cys-15–Cys-40, Cys-24–Cys-38, and Cys-48–Cys-55.

In terms of tissue distribution, expressed by the venom gland.

Its subcellular location is the secreted. In terms of biological role, no toxic effects on mice at dose levels of 5 ug per mouse. May be toxic to insects. The protein is U8-ctenitoxin-Pk1a of Phoneutria keyserlingi (Brazilian wandering spider).